Reading from the N-terminus, the 390-residue chain is Flap endonuclease 1-2 (390 aa).

Residues 1–108 (MGIHQLMQFL…GELARRKKLK (108 aa)) are N-domain. Aspartate 34 lines the Mg(2+) pocket. Residue arginine 74 coordinates DNA. Mg(2+)-binding residues include aspartate 90, glutamate 162, glutamate 164, aspartate 183, and aspartate 185. The interval 126-254 (QALLQNQRTT…GTAYKLIKEY (129 aa)) is I-domain. Glutamate 162 contributes to the DNA binding site. The DNA site is built by glycine 232 and aspartate 234. Residue aspartate 234 coordinates Mg(2+). The interaction with PCNA stretch occupies residues 348 to 356 (FQSRLENFF). The disordered stretch occupies residues 359-390 (TTKIIHPNNSKAKAKSNKKTEQPQKSGGKKKI).

The protein belongs to the XPG/RAD2 endonuclease family. FEN1 subfamily. In terms of assembly, interacts with PCNA. Three molecules of FEN1 bind to one PCNA trimer with each molecule binding to one PCNA monomer. PCNA stimulates the nuclease activity without altering cleavage specificity. Mg(2+) serves as cofactor. Phosphorylated. Phosphorylation upon DNA damage induces relocalization to the nuclear plasma.

It is found in the nucleus. Its subcellular location is the nucleolus. The protein resides in the nucleoplasm. The protein localises to the mitochondrion. Structure-specific nuclease with 5'-flap endonuclease and 5'-3' exonuclease activities involved in DNA replication and repair. During DNA replication, cleaves the 5'-overhanging flap structure that is generated by displacement synthesis when DNA polymerase encounters the 5'-end of a downstream Okazaki fragment. It enters the flap from the 5'-end and then tracks to cleave the flap base, leaving a nick for ligation. Also involved in the long patch base excision repair (LP-BER) pathway, by cleaving within the apurinic/apyrimidinic (AP) site-terminated flap. Acts as a genome stabilization factor that prevents flaps from equilibrating into structures that lead to duplications and deletions. Also possesses 5'-3' exonuclease activity on nicked or gapped double-stranded DNA, and exhibits RNase H activity. Also involved in replication and repair of rDNA and in repairing mitochondrial DNA. The protein is Flap endonuclease 1-2 of Paramecium tetraurelia.